Consider the following 244-residue polypeptide: Lymphotoxin-beta (244 aa).

Residues Met-1–Ser-18 are Cytoplasmic-facing. The chain crosses the membrane as a helical; Signal-anchor for type II membrane protein span at residues Leu-19–Pro-48. Over Gln-49–Gly-244 the chain is Extracellular. The 156-residue stretch at Pro-88 to Val-243 folds into the THD domain. Asn-222 is a glycosylation site (N-linked (GlcNAc...) asparagine).

Belongs to the tumor necrosis factor family. As to quaternary structure, heterotrimer of either two LTB and one LTA subunits or (less prevalent) one LTB and two LTA subunits. In terms of tissue distribution, spleen and thymus.

It is found in the membrane. In terms of biological role, cytokine that binds to LTBR/TNFRSF3. May play a specific role in immune response regulation. Provides the membrane anchor for the attachment of the heterotrimeric complex to the cell surface. Isoform 2 is probably non-functional. The chain is Lymphotoxin-beta (LTB) from Homo sapiens (Human).